We begin with the raw amino-acid sequence, 278 residues long: Indole-3-glycerol phosphate synthase (278 aa).

It belongs to the TrpC family.

The catalysed reaction is 1-(2-carboxyphenylamino)-1-deoxy-D-ribulose 5-phosphate + H(+) = (1S,2R)-1-C-(indol-3-yl)glycerol 3-phosphate + CO2 + H2O. The protein operates within amino-acid biosynthesis; L-tryptophan biosynthesis; L-tryptophan from chorismate: step 4/5. This is Indole-3-glycerol phosphate synthase from Pseudomonas fluorescens (strain ATCC BAA-477 / NRRL B-23932 / Pf-5).